Consider the following 398-residue polypeptide: Tear acid lipase-like protein (398 aa).

The first 19 residues, 1 to 19 (MSWLLSTMCLVHVCGNIFC), serve as a signal peptide directing secretion. Ser170 (nucleophile) is an active-site residue. Cys243 and Cys252 are disulfide-bonded. An N-linked (GlcNAc...) asparagine glycan is attached at Asn268. Residues Asp340 and His369 each act as charge relay system in the active site.

This sequence belongs to the AB hydrolase superfamily. Lipase family. As to quaternary structure, monomer. Post-translationally, N-glycosylated. Expressed in female lacrimal gland acinar cells from where it is secreted into tears (at protein level).

The protein resides in the secreted. Female-specific protein which lacks detectable lipase activity against a range of substrates. Binds the hydrophobic lipid 1-aminoanthracene with high affinity. In Mesocricetus auratus (Golden hamster), this protein is Tear acid lipase-like protein.